Consider the following 525-residue polypeptide: Peptide chain release factor 3 (525 aa).

Residues 8–276 (AMRRTFAIIS…AFVKEAPPPQ (269 aa)) form the tr-type G domain. GTP contacts are provided by residues 17 to 24 (SHPDAGKT), 85 to 89 (DTPGH), and 139 to 142 (NKMD).

This sequence belongs to the TRAFAC class translation factor GTPase superfamily. Classic translation factor GTPase family. PrfC subfamily.

It is found in the cytoplasm. In terms of biological role, increases the formation of ribosomal termination complexes and stimulates activities of RF-1 and RF-2. It binds guanine nucleotides and has strong preference for UGA stop codons. It may interact directly with the ribosome. The stimulation of RF-1 and RF-2 is significantly reduced by GTP and GDP, but not by GMP. This chain is Peptide chain release factor 3, found in Coxiella burnetii (strain CbuK_Q154) (Coxiella burnetii (strain Q154)).